A 952-amino-acid polypeptide reads, in one-letter code: Ubiquitin carboxyl-terminal hydrolase 15 (952 aa).

Ala2 is modified (N-acetylalanine). The mediates interaction with SART3 stretch occupies residues 2-223 (AEGGAADLDT…KNEDGTWPRG (222 aa)). The DUSP domain maps to 7 to 118 (ADLDTQRSDI…GQEPIARKVV (112 aa)). Positions 260 to 904 (CGLSNLGNTC…AAYVLFYQRQ (645 aa)) constitute a USP domain. Residue Cys269 is the Nucleophile of the active site. Thr573 carries the phosphothreonine modification. Residues 597–665 (ETDGPLRCCE…GGDNDSENGL (69 aa)) are disordered. Residues 627–644 (METDEPDDESSQDQELPS) show a composition bias toward acidic residues. The active-site Proton acceptor is His862. A disordered region spans residues 923-952 (SAATGVPLESDEDSNDNDNDLENENCMHTN). A compositionally biased stretch (acidic residues) spans 931–945 (ESDEDSNDNDNDLEN). Residues Ser932 and Ser936 each carry the phosphoserine modification.

This sequence belongs to the peptidase C19 family. As to quaternary structure, a homodimer structure has been reported; however it is unclear whether the protein form a homodimer in vivo. Identified in a complex with the COP9 signalosome complex (CSN). Interacts with SMAD1, SMAD2 and SMAD3; the interaction is direct. Forms a complex with SMURF2 and SMAD7. Interacts with TGFBR1. Interacts with SART3; the interaction is direct. May interact with RNF20 and RNF40. May interact with PRKN. Interacts with INCA1. Phosphorylated. Phosphorylation protects against ubiquitination and subsequent degradation by the proteasome. Post-translationally, ubiquitinated, leading to degradation by the proteasome. In terms of tissue distribution, highly expressed in testis and spleen, and at lower level in other tissues.

Its subcellular location is the cytoplasm. The protein localises to the nucleus. It localises to the mitochondrion. The enzyme catalyses Thiol-dependent hydrolysis of ester, thioester, amide, peptide and isopeptide bonds formed by the C-terminal Gly of ubiquitin (a 76-residue protein attached to proteins as an intracellular targeting signal).. Functionally, hydrolase that removes conjugated ubiquitin from target proteins and regulates various pathways such as the TGF-beta receptor signaling, NF-kappa-B and RNF41/NRDP1-PRKN pathways. Acts as a key regulator of TGF-beta receptor signaling pathway, but the precise mechanism is still unclear: according to a report, acts by promoting deubiquitination of monoubiquitinated R-SMADs (SMAD1, SMAD2 and/or SMAD3), thereby alleviating inhibition of R-SMADs and promoting activation of TGF-beta target genes. According to another reports, regulates the TGF-beta receptor signaling pathway by mediating deubiquitination and stabilization of TGFBR1, leading to an enhanced TGF-beta signal. Able to mediate deubiquitination of monoubiquitinated substrates, 'Lys-27'-, 'Lys-48'- and 'Lys-63'-linked polyubiquitin chains. May also regulate gene expression and/or DNA repair through the deubiquitination of histone H2B. Acts as an inhibitor of mitophagy by counteracting the action of parkin (PRKN): hydrolyzes cleavage of 'Lys-48'- and 'Lys-63'-linked polyubiquitin chains attached by parkin on target proteins such as MFN2, thereby reducing parkin's ability to drive mitophagy. Acts as an associated component of COP9 signalosome complex (CSN) and regulates different pathways via this association: regulates NF-kappa-B by mediating deubiquitination of NFKBIA and deubiquitinates substrates bound to VCP. Involved in endosome organization by mediating deubiquitination of SQSTM1: ubiquitinated SQSTM1 forms a molecular bridge that restrains cognate vesicles in the perinuclear region and its deubiquitination releases target vesicles for fast transport into the cell periphery. Acts as a negative regulator of antifungal immunity by mediating 'Lys-27'-linked deubiquitination of CARD9, thereby inactivating CARD9. This chain is Ubiquitin carboxyl-terminal hydrolase 15 (Usp15), found in Rattus norvegicus (Rat).